Consider the following 370-residue polypeptide: 4-hydroxy-3-methylbut-2-en-1-yl diphosphate synthase (flavodoxin) (370 aa).

Residues cysteine 270, cysteine 273, cysteine 305, and glutamate 312 each contribute to the [4Fe-4S] cluster site.

Belongs to the IspG family. [4Fe-4S] cluster is required as a cofactor.

The enzyme catalyses (2E)-4-hydroxy-3-methylbut-2-enyl diphosphate + oxidized [flavodoxin] + H2O + 2 H(+) = 2-C-methyl-D-erythritol 2,4-cyclic diphosphate + reduced [flavodoxin]. It functions in the pathway isoprenoid biosynthesis; isopentenyl diphosphate biosynthesis via DXP pathway; isopentenyl diphosphate from 1-deoxy-D-xylulose 5-phosphate: step 5/6. Functionally, converts 2C-methyl-D-erythritol 2,4-cyclodiphosphate (ME-2,4cPP) into 1-hydroxy-2-methyl-2-(E)-butenyl 4-diphosphate. This chain is 4-hydroxy-3-methylbut-2-en-1-yl diphosphate synthase (flavodoxin), found in Saccharophagus degradans (strain 2-40 / ATCC 43961 / DSM 17024).